A 347-amino-acid polypeptide reads, in one-letter code: UPF0284 protein SSO2213 (347 aa).

It belongs to the UPF0284 family.

In Saccharolobus solfataricus (strain ATCC 35092 / DSM 1617 / JCM 11322 / P2) (Sulfolobus solfataricus), this protein is UPF0284 protein SSO2213.